The sequence spans 198 residues: Ribosome maturation factor RimP (198 aa).

It belongs to the RimP family.

It localises to the cytoplasm. Functionally, required for maturation of 30S ribosomal subunits. This is Ribosome maturation factor RimP from Rhizobium etli (strain CIAT 652).